The chain runs to 78 residues: Polcalcin Phl p 7 (78 aa).

2 EF-hand domains span residues 1–35 and 35–70; these read MADDMERIFKRFDTNGDGKISLSELTDALRTLGST and TSADEVQRMMAEIDTDGDGFIDFNEFISFCNANPGL. Asp13, Asn15, Asp17, Lys19, Glu24, Asp48, Asp50, Asp52, and Glu59 together coordinate Ca(2+).

Monomer. In terms of tissue distribution, specifically expressed in pollen.

May be involved in the regulation of pollen-tube growth. This chain is Polcalcin Phl p 7, found in Phleum pratense (Common timothy).